The primary structure comprises 648 residues: Leucine-rich repeat and WD repeat-containing protein 1 (648 aa).

LRR repeat units lie at residues 22 to 43, 48 to 69, 70 to 91, and 92 to 113; these read KIQS…PNLL, KLRE…LGLS, HLRI…HQFP, and ELEE…LKVS. Residues 214 to 262 form a disordered region; that stretch reads VEHPQAAGASKFRAREVASKRPGKDPVTLPPSKRVRALPPAQAEGSPMG. Over residues 226–237 the composition is skewed to basic and acidic residues; sequence RAREVASKRPGK. Serine 259 bears the Phosphoserine mark. 5 WD repeats span residues 392–432, 443–482, 497–536, 541–592, and 616–648; these read AHKK…QDYK, CGSV…PQKQ, VSGQ…AGRG, LPVV…KEPP, and VTKT…WRRC.

The protein belongs to the LRWD1 family. As to quaternary structure, integral component of the ORC complex. Directly interacts with CDT1, GMNN and ORC2. Interacts with ORC2 only when non-ubiquitinated; this interaction prevents LRWD1 ubiquitination and degradation. Some of these interactions are regulated in a cell-cycle dependent manner. Interaction with ORC1 occurs predominantly during G1. Association with phosphorylated ORC1 during mitosis is not efficient. Interaction with CDT1 occurs during G1 phase, as well as during mitosis with phosphorylated CDT1. Interaction with GMNN occurs from G1/S to mitosis. Interaction with ORC2 is observed throughout the cell cycle. The stoichiometry of the ORCA/ORC/CDT1/GMNN complex is 1:1:1:2. Interacts with CUL4A and DDB1; this interaction may lead to ubiquitination. Post-translationally, ubiquitinated; undergoes 'Lys-48'-linked polyubiquitination leading to proteasomal degradation. Ubiquitination occurs within the WD repeats at the end of the G1 phase. Ubiquitination may be catalyzed by the CUL4-DDB1 E3 ubiquitin-protein ligase complex and other E3 ligases. Testis-specific.

The protein localises to the nucleus. It localises to the chromosome. It is found in the centromere. The protein resides in the telomere. Its subcellular location is the cytoplasm. The protein localises to the cytoskeleton. It localises to the microtubule organizing center. It is found in the centrosome. The protein resides in the kinetochore. Its function is as follows. Required for G1/S transition. Recruits and stabilizes the origin recognition complex (ORC) onto chromatin during G1 to establish pre-replication complex (preRC) and to heterochromatic sites in post-replicated cells. Binds a combination of DNA and histone methylation repressive marks on heterochromatin. Binds histone H3 and H4 trimethylation marks H3K9me3, H3K27me3 and H4K20me3 in a cooperative manner with DNA methylation. Required for silencing of major satellite repeats. May be important ORC2, ORC3 and ORC4 stability. This is Leucine-rich repeat and WD repeat-containing protein 1 (LRWD1) from Mus musculus (Mouse).